Consider the following 119-residue polypeptide: Protein TusC (119 aa).

This sequence belongs to the DsrF/TusC family. As to quaternary structure, heterohexamer, formed by a dimer of trimers. The hexameric TusBCD complex contains 2 copies each of TusB, TusC and TusD. The TusBCD complex interacts with TusE.

Its subcellular location is the cytoplasm. Part of a sulfur-relay system required for 2-thiolation of 5-methylaminomethyl-2-thiouridine (mnm(5)s(2)U) at tRNA wobble positions. The chain is Protein TusC from Pectobacterium atrosepticum (strain SCRI 1043 / ATCC BAA-672) (Erwinia carotovora subsp. atroseptica).